The sequence spans 654 residues: Endoplasmic reticulum chaperone BiP (654 aa).

The signal sequence occupies residues 1–18 (MKFTVVAAALLLLCAVRA). The segment at 1–80 (MKFTVVAAAL…EGERLIGDAA (80 aa)) is required for interaction with ELAPOR1. An ATP-binding site is contributed by 36–39 (GTTY). Phosphoserine is present on S86. K96 contributes to the ATP binding site. Position 125 is an N6-acetyllysine (K125). Positions 125–280 (KPYIQVDIGG…KKKTGKDVRK (156 aa)) are nucleotide-binding (NBD). At Y160 the chain carries 3'-nitrotyrosine. Position 213 is an N6-acetyllysine (K213). 227–229 (GGT) contacts ATP. An N6-acetyllysine modification is found at K271. 293–300 (EKAKRALS) lines the ATP pocket. K326 carries the N6-acetyllysine modification. Residue K352 forms a Glycyl lysine isopeptide (Lys-Gly) (interchain with G-Cter in SUMO2) linkage. Position 353 is an N6-acetyllysine; alternate (K353). A Glycyl lysine isopeptide (Lys-Gly) (interchain with G-Cter in SUMO1); alternate cross-link involves residue K353. Residue 364–367 (GSTR) participates in ATP binding. The segment at 409–419 (QDTGDLVLLDV) is interdomain linker. Residues 420-500 (CPLTLGIETV…PRGVPQIEVT (81 aa)) form a substrate-binding (SBD) region. At K447 the chain carries N6-succinyllysine. R492 carries the omega-N-methylarginine modification. At T518 the chain carries O-AMP-threonine; alternate. At T518 the chain carries Phosphothreonine; alternate. K585 is subject to N6,N6,N6-trimethyllysine; by METTL21A; in vitro. N6,N6-dimethyllysine; alternate is present on K585. K585 carries the N6-methyllysine; alternate modification. K591 carries the post-translational modification N6-methyllysine. Residues 631-654 (ISKLYGSGGPPPTGEEDTSEKDEL) are disordered. Phosphothreonine occurs at positions 643 and 648. The segment covering 644–654 (GEEDTSEKDEL) has biased composition (acidic residues). S649 bears the Phosphoserine mark. The Prevents secretion from ER motif lies at 651–654 (KDEL).

Belongs to the heat shock protein 70 family. Monomer and homooligomer; homooligomerization via the interdomain linker inactivates the chaperone activity and acts as a storage of HSPA5/BiP molecules. Interacts with DNAJC1 (via J domain). Component of an EIF2 complex at least composed of CELF1/CUGBP1, CALR, CALR3, EIF2S1, EIF2S2, HSP90B1 and HSPA5. Part of a large chaperone multiprotein complex comprising DNAJB11, HSP90B1, HSPA5, HYOU, PDIA2, PDIA4, PDIA6, PPIB, SDF2L1, UGGT1 and very small amounts of ERP29, but not, or at very low levels, CALR nor CANX. Interacts with TMEM132A and TRIM21. May form a complex with ERLEC1, OS9, SEL1L and SYVN1. Interacts with DNAJC10. Interacts with DNAJB9/ERdj4; leading to recruit HSPA5/BiP to ERN1/IRE1. Interacts with ERN1/IRE1 (via luminal domain); the interaction takes place following interaction with DNAJB9/ERdj4 and leads to inactivate ERN1/IRE1, the interaction also competitively inhibits ERN1 interaction with MANF. Interacts directly with MANF (via SAP domain); the interaction inhibits ATP binding to HSPA5/BiP and subsequent nucleotide exchange. Interacts with EIF2AK3/PERK (via luminal domain); interaction leads to inactivate EIF2AK3/PERK. Interacts with MX1. Interacts with METTL23. Interacts with CEMIP; the interaction induces calcium leakage from the endoplasmic reticulum and cell migration. Interacts with PCSK4 form; the interaction takes place in the endoplasmic reticulum. Interacts with CIPC. Interacts with CCDC88B (via C-terminus); the interaction opposes ERN1-mediated JNK activation, protecting against apoptosis. Interacts with INPP5K; necessary for INPP5K localization at the endoplasmic reticulum. Interacts with MANF; the interaction is direct. Interacts with LOXL2; leading to activate the ERN1/IRE1-XBP1 pathway of the unfolded protein response. Interacts with CLU under stressed condition; interaction increases CLU protein stability; facilitates its retrotranslocation and redistribution to the mitochondria; cooperatively suppress stress-induced apoptosis by stabilizing mitochondrial membrane integrity. Interacts with CCDC47. Interacts with CLN3. Interacts with ELAPOR1; may regulate the function of HSPA5 in apoptosis and cell proliferation. Interacts with CASP7. Interacts with ILDR2; the interaction stabilizes ILDR2 expression. Interacts with ADAM7. In unstressed cells, AMPylation at Thr-518 by FICD inactivates the chaperome activity: AMPylated form is locked in a relatively inert state and only weakly stimulated by J domain-containing proteins. In response to endoplasmic reticulum stress, de-AMPylation by the same protein, FICD, restores the chaperone activity.

The protein resides in the endoplasmic reticulum lumen. It is found in the melanosome. Its subcellular location is the cytoplasm. The protein localises to the cell surface. It carries out the reaction ATP + H2O = ADP + phosphate + H(+). Its activity is regulated as follows. The chaperone activity is regulated by ATP-induced allosteric coupling of the nucleotide-binding (NBD) and substrate-binding (SBD) domains. In the ADP-bound and nucleotide-free (apo) states, the two domains have little interaction. In contrast, in the ATP-bound state the two domains are tightly coupled, which results in drastically accelerated kinetics in both binding and release of polypeptide substrates. J domain-containing co-chaperones (DNAJB9/ERdj4 or DNAJC10/ERdj5) stimulate the ATPase activity and are required for efficient substrate recognition by HSPA5/BiP. Homooligomerization inactivates participating HSPA5/BiP protomers and probably act as reservoirs to store HSPA5/BiP molecules when they are not needed by the cell. In terms of biological role, endoplasmic reticulum chaperone that plays a key role in protein folding and quality control in the endoplasmic reticulum lumen. Involved in the correct folding of proteins and degradation of misfolded proteins via its interaction with DNAJC10/ERdj5, probably to facilitate the release of DNAJC10/ERdj5 from its substrate. Acts as a key repressor of the EIF2AK3/PERK and ERN1/IRE1-mediated unfolded protein response (UPR). In the unstressed endoplasmic reticulum, recruited by DNAJB9/ERdj4 to the luminal region of ERN1/IRE1, leading to disrupt the dimerization of ERN1/IRE1, thereby inactivating ERN1/IRE1. Also binds and inactivates EIF2AK3/PERK in unstressed cells. Accumulation of misfolded protein in the endoplasmic reticulum causes release of HSPA5/BiP from ERN1/IRE1 and EIF2AK3/PERK, allowing their homodimerization and subsequent activation. Plays an auxiliary role in post-translational transport of small presecretory proteins across endoplasmic reticulum (ER). May function as an allosteric modulator for SEC61 channel-forming translocon complex, likely cooperating with SEC62 to enable the productive insertion of these precursors into SEC61 channel. Appears to specifically regulate translocation of precursors having inhibitory residues in their mature region that weaken channel gating. May also play a role in apoptosis and cell proliferation. This chain is Endoplasmic reticulum chaperone BiP, found in Rattus norvegicus (Rat).